Consider the following 85-residue polypeptide: ATP synthase subunit c (85 aa).

The next 2 helical transmembrane spans lie at 10–30 (IAVA…FAVL) and 53–73 (FIIA…ALLF).

The protein belongs to the ATPase C chain family. As to quaternary structure, F-type ATPases have 2 components, F(1) - the catalytic core - and F(0) - the membrane proton channel. F(1) has five subunits: alpha(3), beta(3), gamma(1), delta(1), epsilon(1). F(0) has three main subunits: a(1), b(2) and c(10-14). The alpha and beta chains form an alternating ring which encloses part of the gamma chain. F(1) is attached to F(0) by a central stalk formed by the gamma and epsilon chains, while a peripheral stalk is formed by the delta and b chains.

Its subcellular location is the cell inner membrane. In terms of biological role, f(1)F(0) ATP synthase produces ATP from ADP in the presence of a proton or sodium gradient. F-type ATPases consist of two structural domains, F(1) containing the extramembraneous catalytic core and F(0) containing the membrane proton channel, linked together by a central stalk and a peripheral stalk. During catalysis, ATP synthesis in the catalytic domain of F(1) is coupled via a rotary mechanism of the central stalk subunits to proton translocation. Functionally, key component of the F(0) channel; it plays a direct role in translocation across the membrane. A homomeric c-ring of between 10-14 subunits forms the central stalk rotor element with the F(1) delta and epsilon subunits. The protein is ATP synthase subunit c of Vibrio cholerae serotype O1 (strain ATCC 39315 / El Tor Inaba N16961).